The sequence spans 451 residues: Exodeoxyribonuclease 7 large subunit (451 aa).

This sequence belongs to the XseA family. Heterooligomer composed of large and small subunits.

The protein localises to the cytoplasm. It catalyses the reaction Exonucleolytic cleavage in either 5'- to 3'- or 3'- to 5'-direction to yield nucleoside 5'-phosphates.. Functionally, bidirectionally degrades single-stranded DNA into large acid-insoluble oligonucleotides, which are then degraded further into small acid-soluble oligonucleotides. This Neisseria gonorrhoeae (strain ATCC 700825 / FA 1090) protein is Exodeoxyribonuclease 7 large subunit.